The following is a 120-amino-acid chain: SAGA-associated factor 11 (120 aa).

Positions 40–60 (SLLNSSNSNTNSNTNGTIASN) are enriched in low complexity. The segment at 40–82 (SLLNSSNSNTNSNTNGTIASNGGNGTTSDENNEIENSTIQDKS) is disordered. The segment at 93–114 (FRCLNCGRNIAGGRFASHISKC) adopts an SGF11-type zinc-finger fold.

The protein belongs to the SGF11 family. In terms of assembly, component of the 1.8 MDa SAGA transcription coactivator-HAT complex. SAGA is built of 5 distinct domains with specialized functions. Within the SAGA complex, SUS1, SGF11, SGF73 and UBP8 form an additional subcomplex of SAGA called the DUB module (deubiquitination module). Interacts directly with SGF73, SUS1 and UBP8.

It localises to the nucleus. Functionally, functions as a component of the transcription regulatory histone acetylation (HAT) complex SAGA. At the promoters, SAGA is required for recruitment of the basal transcription machinery. It influences RNA polymerase II transcriptional activity through different activities such as TBP interaction and promoter selectivity, interaction with transcription activators, and chromatin modification through histone acetylation and deubiquitination. SAGA acetylates nucleosomal histone H3 to some extent (to form H3K9ac, H3K14ac, H3K18ac and H3K23ac). SAGA interacts with DNA via upstream activating sequences (UASs). Involved in transcriptional regulation of a subset of SAGA-regulated genes. Within the SAGA complex, participates in a subcomplex, that specifically deubiquitinates histones H2B. The chain is SAGA-associated factor 11 from Candida albicans (strain SC5314 / ATCC MYA-2876) (Yeast).